Consider the following 1675-residue polypeptide: Coadhesin (1675 aa).

The Extracellular portion of the chain corresponds to 1-1356; that stretch reads QGNYYSYGGT…TIADQADAAK (1356 aa). One can recognise an F5/8 type C 1 domain in the interval 11-160; sequence TPGTPIGCTN…ICMRVGVESC (150 aa). 7 TSP type-1 domains span residues 168–220, 224–279, 281–336, 338–393, 403–458, 460–515, and 517–572; these read NGAW…NDCV, NGGW…QFCP, DGGW…QCCP, HGGW…QTCP, NGNY…IPCP, NGNW…TACP, and DGGW…GPCP. Cystine bridges form between Cys180/Cys216, Cys184/Cys219, Cys194/Cys206, Cys236/Cys273, Cys240/Cys278, Cys251/Cys263, Cys293/Cys330, Cys297/Cys335, Cys308/Cys320, Cys350/Cys387, Cys354/Cys392, Cys365/Cys377, Cys415/Cys452, Cys419/Cys457, Cys430/Cys442, Cys472/Cys509, Cys476/Cys514, Cys487/Cys499, Cys528/Cys566, Cys532/Cys571, and Cys543/Cys555. The disordered stretch occupies residues 567–588; that stretch reads NKGPCPTSPPTISPPTTGSPAD. VWFA domains are found at residues 595-769, 778-958, and 966-1141; these read DLVF…MDRI, DIGF…FKAL, and DLTF…ISII. One can recognise a TSP type-1 8 domain in the interval 1144-1198; that stretch reads PSGLSKWSSWSACSKTCRYLGKAGTQIRTRDCKIPELGCDGMRIDTVECNKMDCE. Disulfide bonds link Cys1156–Cys1192, Cys1160–Cys1197, and Cys1175–Cys1182. The F5/8 type C 2 domain maps to 1192-1336; it reads CNKMDCEGCG…PCMQAAVFGC (145 aa). The chain crosses the membrane as a helical span at residues 1357–1377; sequence GILIVLWILAGILTFLLLMAC. Topologically, residues 1378–1675 are cytoplasmic; the sequence is CYYCCWHVCC…RGEEWYSRWG (298 aa). The segment covering 1463–1480 has biased composition (basic and acidic residues); the sequence is EKHVTAEDVKSEKPKYSE. The interval 1463-1491 is disordered; it reads EKHVTAEDVKSEKPKYSEEASSGTIKSGS. Polar residues predominate over residues 1481–1491; it reads EASSGTIKSGS.

As to expression, component of the acid-insoluble and acid-soluble organic matrix of the aragonitic skeleton (at protein level).

The protein localises to the membrane. This is Coadhesin from Acropora millepora (Staghorn coral).